A 537-amino-acid chain; its full sequence is Caspase recruitment domain-containing protein 8 (537 aa).

Over residues 1-23 the composition is skewed to basic and acidic residues; sequence MEKKECPEKSSSSEEELPRRDSG. Disordered stretches follow at residues 1 to 28 and 113 to 133; these read MEKKECPEKSSSSEEELPRRDSGSSRNI and GDIPSVSEEQESSEGQDSGDI. Residues 161-296 are ZU5; the sequence is FLGPEGNVDV…FYAVLESPSF (136 aa). Positions 161–446 constitute an FIIND domain; the sequence is FLGPEGNVDV…LQLVAASAPP (286 aa). The tract at residues 297 to 446 is UPA; sequence SLMGILLRIA…LQLVAASAPP (150 aa). Residues 446–536 form the CARD domain; it reads PPFSGAAFVK…YLVSYLRQQN (91 aa).

As to quaternary structure, interacts with DPP9; leading to inhibit activation of the inflammasome. DPP9 acts via formation of a ternary complex, composed of a DPP9 homodimer, one full-length CARD8 protein, and one cleaved C-terminus of CARD8 (Caspase recruitment domain-containing protein 8, C-terminus). Interacts with DPP8; leading to inhibit activation of the inflammasome, probably via formation of a ternary complex with DPP8. Interacts with NLRP3. Interacts with IKBKG/NEMO. Interacts with DRAL. Binds to caspase-1 (CASP1), CARD16/pseudo-ICE and CARD18/ICEBERG. Interacts with NLRP2 (via NACHT domain). Interacts with the C-terminal part of CARD8 (Caspase recruitment domain-containing protein 8, C-terminus) in absence of pathogens and other damage-associated signals. In terms of assembly, interacts with the N-terminal part of CARD8 (Caspase recruitment domain-containing protein 8, N-terminus) in absence of pathogens and other damage-associated signals. Homomultimer; forms the CARD8 inflammasome polymeric complex, a filament composed of homopolymers of this form in response to pathogens and other damage-associated signals. The CARD8 inflammasome polymeric complex directly recruits pro-caspase-1 (proCASP1) independently of PYCARD/ASC. Interacts (via CARD domain) with CASP1 (via CARD domain); leading to CASP1 activation. Undergoes autocatalytic processing within the FIIND domain to generate the N-terminal and C-terminal parts, which are associated non-covalently in absence of pathogens and other damage-associated signals. Post-translationally, ubiquitinated by the N-end rule pathway in response to pathogens and other damage-associated signals, leading to its degradation by the proteasome and subsequent release of the cleaved C-terminal part of the protein (Caspase recruitment domain-containing protein 8, C-terminus), which polymerizes and forms the CARD8 inflammasome. In terms of processing, (Microbial infection) Proteolytic cleavage by HIV-1 protease in the disordered region and within the ZU5 region of the FIIND domain promotes ubiquitination of the N-terminal part by the N-end rule pathway and degradation by the proteasome, releasing the cleaved C-terminal part of the protein (Caspase recruitment domain-containing protein 8, C-terminus), which polymerizes and forms the CARD8 inflammasome. Undergoes less autocatalytic processing within the FIIND domain compared to isoform 5. High expression in lung, ovary, testis and placenta. Lower expression in heart, kidney and liver. Also expressed in spleen, lymph node and bone marrow.

Its subcellular location is the cytoplasm. The protein resides in the nucleus. The protein localises to the inflammasome. CARD8 inflammasome is activated by HIV-1 protease activity: HIV-1 protease cleaves CARD8, promoting ubiquitination and degradation of the N-terminal part, releasing the cleaved C-terminal part of the protein (Caspase recruitment domain-containing protein 8, C-terminus), which polymerizes and forms the CARD8 inflammasome. CARD8 inflammasome is inhibited by DPP8 and DPP9, which sequester the C-terminal fragment of CARD8 (Caspase recruitment domain-containing protein 8, C-terminus) in a ternary complex, thereby preventing CARD8 oligomerization and activation. CARD8 inflammasome is activated by Val-boroPro (Talabostat, PT-100), an inhibitor of dipeptidyl peptidases DPP8 and DPP9. Val-boroPro relieves inhibition of DPP8 and/or DPP9 by inducing the proteasome-mediated destruction of the N-terminal part of CARD8, releasing its C-terminal part from autoinhibition. Indirectly activated by the pseudodipeptide CQ31. CQ31 directly inactivates the peptidases PEPD and XPNPEP1, leading to an accumulation of dipeptides that weaky inhibit DDP8 and DPP9, relieving DPP8- and/or DPP9-mediated inhibition of CARD8. Inflammasome sensor, which mediates inflammasome activation in response to various pathogen-associated signals, leading to subsequent pyroptosis of CD4(+) T-cells and macrophages. Inflammasomes are supramolecular complexes that assemble in the cytosol in response to pathogens and other damage-associated signals and play critical roles in innate immunity and inflammation. Acts as a recognition receptor (PRR): recognizes specific pathogens and other damage-associated signals, such as HIV-1 protease activity or Val-boroPro inhibitor, and mediates CARD8 inflammasome activation. In response to pathogen-associated signals, the N-terminal part of CARD8 is degraded by the proteasome, releasing the cleaved C-terminal part of the protein (Caspase recruitment domain-containing protein 8, C-terminus), which polymerizes to initiate the formation of the inflammasome complex: the CARD8 inflammasome directly recruits pro-caspase-1 (proCASP1) independently of PYCARD/ASC and promotes caspase-1 (CASP1) activation, which subsequently cleaves and activates inflammatory cytokines IL1B and IL18 and gasdermin-D (GSDMD), leading to pyroptosis. Ability to sense HIV-1 protease activity leads to the clearance of latent HIV-1 in patient CD4(+) T-cells after viral reactivation; in contrast, HIV-1 can evade CARD8-sensing when its protease remains inactive in infected cells prior to viral budding. Also acts as a negative regulator of the NLRP3 inflammasome. May also act as an inhibitor of NF-kappa-B activation. Functionally, constitutes the precursor of the CARD8 inflammasome, which mediates autoproteolytic processing within the FIIND domain to generate the N-terminal and C-terminal parts, which are associated non-covalently in absence of pathogens and other damage-associated signals. In terms of biological role, regulatory part that prevents formation of the CARD8 inflammasome: in absence of pathogens and other damage-associated signals, interacts with the C-terminal part of CARD8 (Caspase recruitment domain-containing protein 8, C-terminus), preventing activation of the CARD8 inflammasome. In response to pathogen-associated signals, this part is ubiquitinated by the N-end rule pathway and degraded by the proteasome, releasing the cleaved C-terminal part of the protein, which polymerizes and forms the CARD8 inflammasome. Its function is as follows. Constitutes the active part of the CARD8 inflammasome. In absence of pathogens and other damage-associated signals, interacts with the N-terminal part of CARD8 (Caspase recruitment domain-containing protein 8, N-terminus), preventing activation of the CARD8 inflammasome. In response to pathogen-associated signals, the N-terminal part of CARD8 is degraded by the proteasome, releasing this form, which polymerizes to form the CARD8 inflammasome complex: the CARD8 inflammasome complex then directly recruits pro-caspase-1 (proCASP1) and promotes caspase-1 (CASP1) activation, leading to gasdermin-D (GSDMD) cleavage and subsequent pyroptosis. The protein is Caspase recruitment domain-containing protein 8 of Homo sapiens (Human).